The sequence spans 464 residues: Desmin (464 aa).

Ser2 carries the blocked amino end (Ser) modification. The interval 2 to 100 is head; it reads SQSYSSSQRV…QEFLQTRTNE (99 aa). Phosphoserine; by CDK1 is present on residues Ser7 and Ser23. At Thr65 the chain carries Phosphothreonine; by CDK1. One can recognise an IF rod domain in the interval 100–408; the sequence is EKVELQELND…KLLEGEENRI (309 aa). Residues 101-133 form a coil 1A region; sequence KVELQELNDRFANYIEKVRFLEQQNALMVAEVN. Positions 134–143 are linker 1; sequence RLRGKEPTRV. Residues 144–244 are coil 1B; sequence AEMYEEELRE…HEEEIRELQA (101 aa). The interval 245–260 is linker 12; it reads QLQEQHIQVEMDISKP. Positions 261 to 279 are coil 2A; sequence DLTAALRDIRAQYESIAAK. The interval 280–287 is linker 2; that stretch reads NIAEAEEW. Positions 288-404 are coil 2B; it reads YKSKVSDLTQ…ATYRKLLEGE (117 aa). The tail stretch occupies residues 405 to 464; it reads ENRISIPMHQTFASALNFRETSPDQRGSEVHTKKTVMIKTIETRDGEVVSEATQQQHEVL.

This sequence belongs to the intermediate filament family. In terms of assembly, homomer.

The protein localises to the cytoplasm. The protein resides in the myofibril. Its subcellular location is the sarcomere. It localises to the z line. It is found in the cell membrane. The protein localises to the sarcolemma. Muscle-specific type III intermediate filament essential for proper muscular structure and function. Plays a crucial role in maintaining the structure of sarcomeres, inter-connecting the Z-disks and forming the myofibrils, linking them not only to the sarcolemmal cytoskeleton, but also to the nucleus and mitochondria, thus providing strength for the muscle fiber during activity. In adult striated muscle they form a fibrous network connecting myofibrils to each other and to the plasma membrane from the periphery of the Z-line structures. This chain is Desmin (DES), found in Gallus gallus (Chicken).